The sequence spans 334 residues: HTH-type transcriptional repressor PurR (334 aa).

Residues 2–56 (ATIKDVARLAGVSTTTVSHVINKTRFVAEATQEKVMKAVDELNYAPSAVARSLKC) form the HTH lacI-type domain. Positions 4-23 (IKDVARLAGVSTTTVSHVIN) form a DNA-binding region, H-T-H motif. A DNA-binding region spans residues 48–56 (SAVARSLKC). Residues F73, K189, F220, and D274 each coordinate hypoxanthine.

Homodimer.

It participates in purine metabolism; purine nucleotide biosynthesis [regulation]. Functionally, is the main repressor of the genes involved in the de novo synthesis of purine nucleotides, regulating purB, purC, purEK, purF, purHD, purL, purMN and guaBA expression. PurR is allosterically activated to bind its cognate DNA by binding the purine corepressors, hypoxanthine or guanine, thereby effecting transcription repression. The polypeptide is HTH-type transcriptional repressor PurR (Vibrio vulnificus (strain CMCP6)).